A 684-amino-acid chain; its full sequence is ATP-dependent zinc metalloprotease FtsH (684 aa).

Over Met-1 to Arg-21 the chain is Cytoplasmic. The helical transmembrane segment at Phe-22–Asn-42 threads the bilayer. The Periplasmic portion of the chain corresponds to Asp-43 to Ala-138. Residues Ile-139–Leu-159 traverse the membrane as a helical segment. The Cytoplasmic portion of the chain corresponds to Met-160–Ala-684. Gly-236–Thr-243 serves as a coordination point for ATP. Zn(2+) is bound at residue His-459. The active site involves Glu-460. Zn(2+) contacts are provided by His-463 and Asp-534. Basic and acidic residues predominate over residues Glu-647–Glu-662. The tract at residues Glu-647–Ala-684 is disordered.

It in the central section; belongs to the AAA ATPase family. The protein in the C-terminal section; belongs to the peptidase M41 family. In terms of assembly, homohexamer. Requires Zn(2+) as cofactor.

The protein resides in the cell inner membrane. Functionally, acts as a processive, ATP-dependent zinc metallopeptidase for both cytoplasmic and membrane proteins. Plays a role in the quality control of integral membrane proteins. The protein is ATP-dependent zinc metalloprotease FtsH of Parabacteroides distasonis (strain ATCC 8503 / DSM 20701 / CIP 104284 / JCM 5825 / NCTC 11152).